A 111-amino-acid polypeptide reads, in one-letter code: MVAKIKSGDLVKVIRGKDRGKEGTVKRVLKDDRLIVEGVQIVKKHVRATQQGQQAGIVSVEAPIHRSNVMVIDPETKQPTRVGVVIKEEARDGKVKTVRVRVAKKSGKELA.

The protein belongs to the universal ribosomal protein uL24 family. In terms of assembly, part of the 50S ribosomal subunit.

One of two assembly initiator proteins, it binds directly to the 5'-end of the 23S rRNA, where it nucleates assembly of the 50S subunit. Its function is as follows. One of the proteins that surrounds the polypeptide exit tunnel on the outside of the subunit. This is Large ribosomal subunit protein uL24 from Bifidobacterium animalis subsp. lactis (strain AD011).